The sequence spans 331 residues: Protoheme IX farnesyltransferase (331 aa).

A run of 9 helical transmembrane segments spans residues 22–42 (LVKPKIIALLLMTTAGAMWMA), 50–70 (FGVTLLGGGMAAAAANVINMV), 100–120 (FAGILAVMSFGLLACFTNLLA), 147–167 (IVIGGAAGAIPPLVGWAAATG), 174–194 (WVMFALIFLWTPPHFWALAIL), 220–240 (ILLYALLLVPVSLLLVYPLHV), 241–261 (LGSFYLSAATLLGSLLIWKAV), 273–293 (ATSLFTFANLYLLLLCGAMGL), and 307–327 (LASLQGVYASLGALANHLGAM).

Belongs to the UbiA prenyltransferase family. Protoheme IX farnesyltransferase subfamily.

Its subcellular location is the cell inner membrane. The catalysed reaction is heme b + (2E,6E)-farnesyl diphosphate + H2O = Fe(II)-heme o + diphosphate. It participates in porphyrin-containing compound metabolism; heme O biosynthesis; heme O from protoheme: step 1/1. Functionally, converts heme B (protoheme IX) to heme O by substitution of the vinyl group on carbon 2 of heme B porphyrin ring with a hydroxyethyl farnesyl side group. This Synechococcus sp. (strain JA-3-3Ab) (Cyanobacteria bacterium Yellowstone A-Prime) protein is Protoheme IX farnesyltransferase.